A 666-amino-acid polypeptide reads, in one-letter code: Nuclear distribution protein nudE homolog 1 (666 aa).

A coiled-coil region spans residues 14-195 (EEEIAHYREK…KDQLARAIAT (182 aa)). 4 disordered regions span residues 40 to 64 (EFQQ…KQQA), 220 to 310 (DDIN…SGIP), 369 to 388 (KRVT…PAPH), and 397 to 666 (DHNT…KVKK). The span at 251–274 (RSGTMSSIPVASPSTKRFSQQIPH) shows a compositional bias: polar residues. Composition is skewed to low complexity over residues 275 to 287 (SPSF…STTS) and 372 to 383 (TSTTSTTSSTTT). Over residues 400 to 410 (TTPTAQSQQFP) the composition is skewed to polar residues. 3 stretches are compositionally biased toward low complexity: residues 449–465 (PTFR…LPSR), 473–485 (ASGS…SGTA), and 536–554 (SATP…STSN). Polar residues-rich tracts occupy residues 587-599 (RQSL…TPTT) and 614-638 (SSLS…SGRP).

This sequence belongs to the nudE family. As to quaternary structure, self-associates. Interacts with PAC1.

The protein localises to the cytoplasm. Its subcellular location is the cytoskeleton. Its function is as follows. Required for nuclear migration. The protein is Nuclear distribution protein nudE homolog 1 (NDE1) of Cryptococcus neoformans var. neoformans serotype D (strain B-3501A) (Filobasidiella neoformans).